The primary structure comprises 95 residues: Defensin-like protein 247 (95 aa).

Residues 1–24 (MKFAAIFLVTCVFFSLFSSNLSQG) form the signal peptide. 4 disulfides stabilise this stretch: cysteine 37-cysteine 94, cysteine 48-cysteine 77, cysteine 56-cysteine 87, and cysteine 75-cysteine 89.

The protein belongs to the DEFL family.

The protein localises to the secreted. This is Defensin-like protein 247 (SCRL6) from Arabidopsis thaliana (Mouse-ear cress).